Here is a 271-residue protein sequence, read N- to C-terminus: MAFKFKTFAAVGALIGSLALVGCGQDEKDPNHIKVGVIVGAEQQVAEVAQKVAKDKYGLDVELVTFNDYVLPNEALSKGDIDANAFQHKPYLDQQLKDRGYKLVAVGNTFVYPIAGYSKKIKSLDELQDGSQVAVPNDPTNLGRSLLLLQKVGLIKLKDGVGLLPTVLDVVENPKNLKIVELEAPQLPRSLDDAQIALAVINTTYASQIGLTPAKNGIFVEDKDSPYVNLIVTREDNKDAENVKKFVQAYQSDEVYEAANKVFNGGAVKGW.

A signal peptide spans 1–22; the sequence is MAFKFKTFAAVGALIGSLALVG. Cys-23 carries the N-palmitoyl cysteine lipid modification. Cys-23 carries S-diacylglycerol cysteine lipidation.

This sequence belongs to the NlpA lipoprotein family.

Its subcellular location is the cell membrane. Functionally, this protein is a component of a D-methionine permease, a binding protein-dependent, ATP-driven transport system. In Escherichia coli O157:H7, this protein is D-methionine-binding lipoprotein MetQ (metQ).